A 592-amino-acid chain; its full sequence is Medium-chain-fatty-acid--[acyl-carrier-protein] ligase JamA (592 aa).

It belongs to the ATP-dependent AMP-binding enzyme family.

It catalyses the reaction a medium-chain fatty acid + holo-[ACP] + ATP = a medium-chain fatty acyl-[ACP] + AMP + diphosphate. It carries out the reaction a medium-chain fatty acid + ATP + H(+) = a medium-chain fatty acyl-AMP + diphosphate. The enzyme catalyses a medium-chain fatty acyl-AMP + holo-[ACP] = a medium-chain fatty acyl-[ACP] + AMP + H(+). Its function is as follows. Ligase involved in the biosynthesis of jamaicamides, which show sodium channel blocking activity and fish toxicity. Initiates jamaicamide biosynthesis by the activation of the starter unit, 5-hexenoic acid, followed by the loading of the activated 5-hexenoic acid onto the acyl carrier protein JamC. In vitro, can also use 5-hexynoic acid, heptanoic acid, butanoic acid, hexanoic acid and benzoic acid. The chain is Medium-chain-fatty-acid--[acyl-carrier-protein] ligase JamA from Moorena producens (strain JHB).